We begin with the raw amino-acid sequence, 154 residues long: MTDLIDATDRRILHELCANARIPVTELARKVGLSKTPVAARIRAMEEMGLITGYRAMLSPIRLGLIHVTYVEVRLNDTRQKALEQFNAAVREIPEVEECYMIAGGFDYLLKVRSHDIAEYRKIMGEKLSALPHVAATSSYVAMEAVVEQNSPSL.

The 62-residue stretch at 5-66 (IDATDRRILH…MLSPIRLGLI (62 aa)) folds into the HTH asnC-type domain. Positions 24-43 (VTELARKVGLSKTPVAARIR) form a DNA-binding region, H-T-H motif.

In terms of biological role, transcriptional activator of the putA gene in response to proline. The protein is Proline dehydrogenase transcriptional activator (putR) of Rhodobacter capsulatus (Rhodopseudomonas capsulata).